We begin with the raw amino-acid sequence, 162 residues long: Caveolin-2 (162 aa).

Over methionine 1–lysine 86 the chain is Cytoplasmic. The residue at position 19 (tyrosine 19) is a Phosphotyrosine; by SRC. A phosphoserine mark is found at serine 20 and serine 23. Tyrosine 27 carries the post-translational modification Phosphotyrosine; by SRC. An intramembrane region (helical) is located at residues phenylalanine 87–leucine 107. Residues serine 108 to aspartate 162 are Cytoplasmic-facing.

The protein belongs to the caveolin family. Monomer or homodimer. Interacts with CAV1; the interaction forms a stable heterooligomeric complex that is required for targeting to lipid rafts and for caveolae formation. Tyrosine phosphorylated forms do not form heterooligomers with the Tyr-19-phosphorylated form existing as a monomer or dimer, and the Tyr-27-form as a monomer only. Interacts (tyrosine phosphorylated form) with the SH2 domain-containing proteins, RASA1, NCK1 and SRC. Interacts (tyrosine phosphorylated form) with INSR, the interaction (Tyr-27-phosphorylated form) is increased on insulin stimulation. Interacts (Tyr-19 phosphorylated form) with MAPK1 (phosphorylated form); the interaction, promoted by insulin, leads to nuclear location and MAPK1 activation. Interacts with STAT3; the interaction is increased on insulin-induced tyrosine phosphorylation leading to STAT activation. Phosphorylated on serine and tyrosine residues. CAV1 promotes phosphorylation on Ser-23 which then targets the complex to the plasma membrane, lipid rafts and caveolae. Phosphorylation on both Tyr-19 and Tyr-27 is required for insulin-induced 'Ser-727' phosphorylation of STAT3 and its activation. Phosphorylation on Tyr-19 is required for insulin-induced phosphorylation of MAPK1 and DNA binding of STAT3. Tyrosine phosphorylation is induced by both EGF and insulin.

Its subcellular location is the nucleus. It is found in the cytoplasm. The protein localises to the golgi apparatus membrane. It localises to the cell membrane. The protein resides in the membrane. Its subcellular location is the caveola. Functionally, may act as a scaffolding protein within caveolar membranes. Interacts directly with G-protein alpha subunits and can functionally regulate their activity. Acts as an accessory protein in conjunction with CAV1 in targeting to lipid rafts and driving caveolae formation. Positive regulator of cellular mitogenesis of the MAPK signaling pathway. Required for the insulin-stimulated nuclear translocation and activation of MAPK1 and STAT3, and the subsequent regulation of cell cycle progression. In Equus caballus (Horse), this protein is Caveolin-2 (CAV2).